The chain runs to 239 residues: MKIDILTLFPEMFSPLEHSIVGKAREKGLLDIQYHNFRENAEKARHVDDEPYGGGQGMLLRVQPIFDSFDAIEKKNPRVILLDPAGKQFDQAYAEDLAQEEELIFICGHYEGYDERIKTLVTDEISLGDYVLTGGELAAMTMIDATVRLIPEVIGKESSHQDDSFSSGLLEYPQYTRPYDYRGMVVPDVLMSGHHEKIRQWRLYESLKKTYERRPDLLEHYQLTVEEEKMLAEIKENKE.

S-adenosyl-L-methionine contacts are provided by residues glycine 108 and 127 to 132 (LGDYVL).

It belongs to the RNA methyltransferase TrmD family. As to quaternary structure, homodimer.

It is found in the cytoplasm. The catalysed reaction is guanosine(37) in tRNA + S-adenosyl-L-methionine = N(1)-methylguanosine(37) in tRNA + S-adenosyl-L-homocysteine + H(+). Its function is as follows. Specifically methylates guanosine-37 in various tRNAs. This is tRNA (guanine-N(1)-)-methyltransferase from Streptococcus pneumoniae serotype 2 (strain D39 / NCTC 7466).